The sequence spans 259 residues: MNRDNTIAWAVDDLCVNYDHSDVLCHIAFSLPSGAMAAIIGPNGAGKSTLLKASLGLIRASSGQSLFFGQKFAKVHQRIAYMPQRASVDWDFPMTVLDLVLMGCYGYKGMWNRISTGDRREAMNILERVGLADFANRQIGKLSGGQQQRAFLARSLMQKADLYLMDELFSAIDMASYRMVVDVLQDLKKEGKTIVVIHHDLSNVRQLFDHVILLNKHLVCSGSVEKCLTKEAIFQAYGCELELLDYTLKLSRGKYQGSC.

One can recognise an ABC transporter domain in the interval 9–241 (WAVDDLCVNY…AIFQAYGCEL (233 aa)). 41–48 (GPNGAGKS) is an ATP binding site.

Belongs to the ABC transporter superfamily.

The protein localises to the cell inner membrane. In terms of biological role, part of an ATP-driven transport system TC_0338/TC_0339/TC_0341/TC_0342 for a metal. Probably responsible for energy coupling to the transport system. This Chlamydia muridarum (strain MoPn / Nigg) protein is Probable metal transport system ATP-binding protein TC_0339.